The chain runs to 642 residues: MMVESKTPLLDTVNTPEDLRKLDPSQLRQFADELRTETINAVSVTGGHLGAGLGVVELTVALHYVFNTPADRLIWDVGHQCYPHKILTGRRDRIRTLRMGGGLSGFTKRAESEYDPFGAGHSSTSISAALGMAVGRDQLGHKNHVICVIGDGSISAGMAYEAMNNAGAMNSRMIVILNDNDMSIAPPVGAMSGYLSRLISSRQYRGLRELGKQVAERLPRPLQEAARRAEEYARGFVTGGTLFEEMGFYYVGPIDGHNLDHLLPVLENIRDDQGTGPVLIHAVTQKGRGYGPAERSADKLHAVSKFDVITGAQAKAKANAPSYTRVFADSLIQEAEADSRVVAITAAMPSGTGLDLFEKRFPDRTYDVGIAEQHAVTFAAGLAAEGLKPFCAIYSTFLQRAYDQVVHDVCIQNLPVRFAIDRAGLVGSDGCTHAGSFDVAYLGCVPNIVIMAAADEAELKHMVATAAAYDHGPIAVRYPRGEGVGLEMPERGQVLEIGKGRIVKEGTKVAILSLGTRLKEALLAAEDLNARGLSTTVADARFAKPIDEALIRRLAQDHEVLITVEEGSIGGFGSYVLHFLAQSGLLDQGLKVRPMVLPDIFQDQDAPAKQYDEAGLNARHIVETALKALGTGLAAETPAARA.

Thiamine diphosphate is bound by residues histidine 79 and 120–122 (GHS). Aspartate 151 contributes to the Mg(2+) binding site. Residues 152–153 (GS), asparagine 180, tyrosine 290, and glutamate 372 each bind thiamine diphosphate. Mg(2+) is bound at residue asparagine 180.

This sequence belongs to the transketolase family. DXPS subfamily. As to quaternary structure, homodimer. The cofactor is Mg(2+). Requires thiamine diphosphate as cofactor.

The catalysed reaction is D-glyceraldehyde 3-phosphate + pyruvate + H(+) = 1-deoxy-D-xylulose 5-phosphate + CO2. Its pathway is metabolic intermediate biosynthesis; 1-deoxy-D-xylulose 5-phosphate biosynthesis; 1-deoxy-D-xylulose 5-phosphate from D-glyceraldehyde 3-phosphate and pyruvate: step 1/1. Functionally, catalyzes the acyloin condensation reaction between C atoms 2 and 3 of pyruvate and glyceraldehyde 3-phosphate to yield 1-deoxy-D-xylulose-5-phosphate (DXP). This is 1-deoxy-D-xylulose-5-phosphate synthase from Rhodospirillum centenum (strain ATCC 51521 / SW).